A 70-amino-acid chain; its full sequence is Cytochrome c oxidase subunit 8B, mitochondrial (70 aa).

The N-terminal 24 residues, 1-24 (MPRLPPILRLLQAPAKFTVVPKAH), are a transit peptide targeting the mitochondrion. Topologically, residues 25 to 38 (VSAKPAKTPTSAVE) are mitochondrial matrix. A helical transmembrane segment spans residues 39–60 (QAVGISAIVVGFMVPAGWVLAH). Residues 61 to 70 (LESYKKSSAA) lie on the Mitochondrial intermembrane side of the membrane.

This sequence belongs to the cytochrome c oxidase VIII family. Component of the cytochrome c oxidase (complex IV, CIV), a multisubunit enzyme composed of 14 subunits. The complex is composed of a catalytic core of 3 subunits MT-CO1, MT-CO2 and MT-CO3, encoded in the mitochondrial DNA, and 11 supernumerary subunits COX4I, COX5A, COX5B, COX6A, COX6B, COX6C, COX7A, COX7B, COX7C, COX8 and NDUFA4, which are encoded in the nuclear genome. The complex exists as a monomer or a dimer and forms supercomplexes (SCs) in the inner mitochondrial membrane with NADH-ubiquinone oxidoreductase (complex I, CI) and ubiquinol-cytochrome c oxidoreductase (cytochrome b-c1 complex, complex III, CIII), resulting in different assemblies (supercomplex SCI(1)III(2)IV(1) and megacomplex MCI(2)III(2)IV(2)).

It is found in the mitochondrion inner membrane. The protein operates within energy metabolism; oxidative phosphorylation. Component of the cytochrome c oxidase, the last enzyme in the mitochondrial electron transport chain which drives oxidative phosphorylation. The respiratory chain contains 3 multisubunit complexes succinate dehydrogenase (complex II, CII), ubiquinol-cytochrome c oxidoreductase (cytochrome b-c1 complex, complex III, CIII) and cytochrome c oxidase (complex IV, CIV), that cooperate to transfer electrons derived from NADH and succinate to molecular oxygen, creating an electrochemical gradient over the inner membrane that drives transmembrane transport and the ATP synthase. Cytochrome c oxidase is the component of the respiratory chain that catalyzes the reduction of oxygen to water. Electrons originating from reduced cytochrome c in the intermembrane space (IMS) are transferred via the dinuclear copper A center (CU(A)) of subunit 2 and heme A of subunit 1 to the active site in subunit 1, a binuclear center (BNC) formed by heme A3 and copper B (CU(B)). The BNC reduces molecular oxygen to 2 water molecules using 4 electrons from cytochrome c in the IMS and 4 protons from the mitochondrial matrix. The polypeptide is Cytochrome c oxidase subunit 8B, mitochondrial (Cox8b) (Mus musculus (Mouse)).